A 63-amino-acid polypeptide reads, in one-letter code: Large ribosomal subunit protein bL28 (63 aa).

It belongs to the bacterial ribosomal protein bL28 family.

The chain is Large ribosomal subunit protein bL28 from Desulforudis audaxviator (strain MP104C).